The primary structure comprises 506 residues: Anaerobic nitric oxide reductase transcription regulator NorR (506 aa).

D57 is subject to 4-aspartylphosphate. Residues 187 to 416 enclose the Sigma-54 factor interaction domain; it reads MIGLSPAMTQ…LEHAIHRAVV (230 aa). ATP-binding positions include 215 to 222 and 278 to 287; these read GETGTGKE and ADNGTLFLDE. A DNA-binding region (H-T-H motif) is located at residues 481–500; that stretch reads WAASARALETDVANLHRLAK.

It participates in nitrogen metabolism; nitric oxide reduction. Required for the expression of anaerobic nitric oxide (NO) reductase, acts as a transcriptional activator for at least the norVW operon. Activation also requires sigma-54. The chain is Anaerobic nitric oxide reductase transcription regulator NorR from Salmonella agona (strain SL483).